Consider the following 274-residue polypeptide: Triosephosphate isomerase (274 aa).

Substrate is bound at residue 31 to 33; sequence NWK. The active-site Electrophile is histidine 118. Glutamate 188 functions as the Proton acceptor in the catalytic mechanism. Residues glycine 194, serine 234, and 255–256 each bind substrate; that span reads GG.

Belongs to the triosephosphate isomerase family. As to quaternary structure, homodimer.

It localises to the cytoplasm. It catalyses the reaction D-glyceraldehyde 3-phosphate = dihydroxyacetone phosphate. It functions in the pathway carbohydrate biosynthesis; gluconeogenesis. The protein operates within carbohydrate degradation; glycolysis; D-glyceraldehyde 3-phosphate from glycerone phosphate: step 1/1. Its function is as follows. Involved in the gluconeogenesis. Catalyzes stereospecifically the conversion of dihydroxyacetone phosphate (DHAP) to D-glyceraldehyde-3-phosphate (G3P). In Chlamydia trachomatis serovar D (strain ATCC VR-885 / DSM 19411 / UW-3/Cx), this protein is Triosephosphate isomerase.